The sequence spans 401 residues: NALCN channel auxiliary factor 2 (401 aa).

A helical membrane pass occupies residues 42 to 62 (LASLLFFTALLSDHLWLCAGG). N-linked (GlcNAc...) asparagine glycans are attached at residues Asn-77, Asn-97, Asn-153, and Asn-178. Residues 362 to 382 (LCVLVLFLLHTFISITTLQHC) form a helical membrane-spanning segment.

The protein belongs to the NALF family.

Its subcellular location is the membrane. Its function is as follows. Probable component of the NALCN channel complex, a channel that regulates the resting membrane potential and controls neuronal excitability. This chain is NALCN channel auxiliary factor 2 (nalf2), found in Danio rerio (Zebrafish).